The sequence spans 338 residues: Ketol-acid reductoisomerase (NADP(+)) (338 aa).

The 181-residue stretch at 1–181 (MKVYYDKDAD…GGTKGGVIET (181 aa)) folds into the KARI N-terminal Rossmann domain. Residues 24–27 (YGSQ), Arg-47, Ser-52, and 82–85 (DETQ) each bind NADP(+). Residue His-107 is part of the active site. Residue Gly-133 participates in NADP(+) binding. The KARI C-terminal knotted domain occupies 182 to 327 (SFREETETDL…AELRAMMPWI (146 aa)). Mg(2+)-binding residues include Asp-190, Glu-194, Glu-226, and Glu-230. Ser-251 provides a ligand contact to substrate.

It belongs to the ketol-acid reductoisomerase family. Requires Mg(2+) as cofactor.

It catalyses the reaction (2R)-2,3-dihydroxy-3-methylbutanoate + NADP(+) = (2S)-2-acetolactate + NADPH + H(+). The enzyme catalyses (2R,3R)-2,3-dihydroxy-3-methylpentanoate + NADP(+) = (S)-2-ethyl-2-hydroxy-3-oxobutanoate + NADPH + H(+). Its pathway is amino-acid biosynthesis; L-isoleucine biosynthesis; L-isoleucine from 2-oxobutanoate: step 2/4. It functions in the pathway amino-acid biosynthesis; L-valine biosynthesis; L-valine from pyruvate: step 2/4. In terms of biological role, involved in the biosynthesis of branched-chain amino acids (BCAA). Catalyzes an alkyl-migration followed by a ketol-acid reduction of (S)-2-acetolactate (S2AL) to yield (R)-2,3-dihydroxy-isovalerate. In the isomerase reaction, S2AL is rearranged via a Mg-dependent methyl migration to produce 3-hydroxy-3-methyl-2-ketobutyrate (HMKB). In the reductase reaction, this 2-ketoacid undergoes a metal-dependent reduction by NADPH to yield (R)-2,3-dihydroxy-isovalerate. This chain is Ketol-acid reductoisomerase (NADP(+)), found in Laribacter hongkongensis (strain HLHK9).